Reading from the N-terminus, the 122-residue chain is Large ribosomal subunit protein uL14c (122 aa).

This sequence belongs to the universal ribosomal protein uL14 family. Part of the 50S ribosomal subunit.

Its subcellular location is the plastid. The protein localises to the chloroplast. Functionally, binds to 23S rRNA. In Psilotum nudum (Whisk fern), this protein is Large ribosomal subunit protein uL14c.